Here is a 1340-residue protein sequence, read N- to C-terminus: Early transcription factor large subunit homolog (1340 aa).

The protein belongs to the asfivirus G1340L family.

It is found in the virion. Putative initation factor. This African swine fever virus (isolate Tick/South Africa/Pretoriuskop Pr4/1996) (ASFV) protein is Early transcription factor large subunit homolog.